We begin with the raw amino-acid sequence, 187 residues long: HTH-type dhaKLM operon transcriptional activator DhaS (187 aa).

In terms of domain architecture, HTH tetR-type spans 12 to 72 (IITQKIIAKA…WIFENDFAEL (61 aa)). Positions 35 to 54 (SVSDIMQTAKIRRQTFYNYF) form a DNA-binding region, H-T-H motif.

Homodimer. Interacts with a homodimer of DhaQ.

In terms of biological role, in complex with DhaQ, upon activation by dihydroxyacetone, activates transcription of the dhaKLM operon. Binds the inverted repeat sequence 5'-GGACACATN(6)ATTTGTCC-3' located upstream of and partially overlapping with the -35 promoter sequence of the dhaKLM operon promoter. This is HTH-type dhaKLM operon transcriptional activator DhaS (dhaS) from Lactococcus lactis subsp. lactis (strain IL1403) (Streptococcus lactis).